The following is a 574-amino-acid chain: K(+)/H(+) antiporter NhaP2 (574 aa).

A run of 13 helical transmembrane segments spans residues 6 to 26, 34 to 54, 58 to 78, 87 to 107, 109 to 129, 173 to 193, 196 to 216, 219 to 239, 242 to 262, 271 to 291, 299 to 319, 335 to 355, and 359 to 379; these read INSF…LSPM, ILLI…GGIL, YSTA…DGGM, VALW…TSIT, VMAA…GAIV, IAIL…ISFI, FGLG…LVNV, LAEG…YATS, LGGS…NKPT, VLDG…GLLL, IWLP…PLAV, WFIS…VFPM, and LPGA…SLLV. One can recognise an RCK C-terminal domain in the interval 405-486; sequence SGVEIYPKSE…LEALSNLFSQ (82 aa).

It belongs to the monovalent cation:proton antiporter 1 (CPA1) transporter (TC 2.A.36) family. NhaP2 subfamily.

It localises to the cell inner membrane. It catalyses the reaction K(+)(in) + H(+)(out) = K(+)(out) + H(+)(in). Functionally, k(+)/H(+) antiporter that extrudes potassium in exchange for external protons and maintains the internal concentration of potassium under toxic levels. The protein is K(+)/H(+) antiporter NhaP2 of Shewanella oneidensis (strain ATCC 700550 / JCM 31522 / CIP 106686 / LMG 19005 / NCIMB 14063 / MR-1).